We begin with the raw amino-acid sequence, 446 residues long: Glutamine synthetase (446 aa).

Residues Glu18–Gly103 enclose the GS beta-grasp domain. A GS catalytic domain is found at Pro110–Tyr446. The Mg(2+) site is built by Glu134 and Glu136. ATP is bound at residue Glu186. Residues Glu191 and Glu198 each contribute to the Mg(2+) site. L-glutamate contacts are provided by residues Asn242–Gly243 and Gly243. A Mg(2+)-binding site is contributed by His247. Ser251 is a binding site for ATP. L-glutamate is bound by residues Arg300, Glu306, and Arg318. 2 residues coordinate ATP: Arg318 and Arg323. Glu335 serves as a coordination point for Mg(2+). Position 337 (Arg337) interacts with L-glutamate.

This sequence belongs to the glutamine synthetase family. In terms of assembly, oligomer of 12 subunits arranged in the form of two hexagons. In its feedback-inhibited form, interacts with TnrA in order to block its DNA-binding activity. The cofactor is Mg(2+).

The protein resides in the cytoplasm. It catalyses the reaction L-glutamate + NH4(+) + ATP = L-glutamine + ADP + phosphate + H(+). Inhibited by glutamine. In terms of biological role, glutamine synthetase (GS) is an unusual multitasking protein that functions as an enzyme, a transcription coregulator, and a chaperone in ammonium assimilation and in the regulation of genes involved in nitrogen metabolism. It catalyzes the ATP-dependent biosynthesis of glutamine from glutamate and ammonia. Feedback-inhibited GlnA also interacts with and regulates the activity of the transcriptional regulator TnrA. During nitrogen limitation, TnrA is in its DNA-binding active state and turns on the transcription of genes required for nitrogen assimilation. Under conditions of nitrogen excess, feedback-inhibited GlnA forms a stable complex with TnrA, which inhibits its DNA-binding activity. In contrast, feedback-inhibited GlnA acts as a chaperone to stabilize the DNA-binding activity of GlnR, which represses the transcription of nitrogen assimilation genes. The sequence is that of Glutamine synthetase from Staphylococcus epidermidis (strain ATCC 35984 / DSM 28319 / BCRC 17069 / CCUG 31568 / BM 3577 / RP62A).